The following is a 318-amino-acid chain: MNRFTRYDVTPEAIFNQRRQIIKAMGLGAAALSLPNIGFAAEKSDQLKALNFKDAPKGDFLLTPENKVTGYNNFYEFGVDKASPAKFAKDFKTDPWSLEIAGEVENPFVLNHAQLFNTFPLEERIYRFRCVEAWSMVIPWVGFELARLVEMAKPTSKAKFVIFHTLHDPEQMPGQKNKFFGGGIDYPYVEALTIEEAMNPLTLLSVGLYGKMLPPQNGAPIRLVVPWKYGFKSIKSIVKITFSETRPRTTWEKLAPHEYGFYANVNPNVDHPRWSQASERVIGSGGLLAVKRQDTLMFNGYEKEVAHLYKGLDLKVNF.

Positions 1–40 (MNRFTRYDVTPEAIFNQRRQIIKAMGLGAAALSLPNIGFA) form a signal peptide, tat-type signal. Mo-molybdopterin-binding positions include asparagine 72, 75–76 (YE), cysteine 130, threonine 165, asparagine 217, arginine 222, and 233–235 (SIK).

Belongs to the MsrP family. Heterodimer of a catalytic subunit (MsrP) and a heme-binding subunit (MsrQ). Mo-molybdopterin serves as cofactor. Post-translationally, predicted to be exported by the Tat system. The position of the signal peptide cleavage has not been experimentally proven.

Its subcellular location is the periplasm. It carries out the reaction L-methionyl-[protein] + a quinone + H2O = L-methionyl-(S)-S-oxide-[protein] + a quinol. It catalyses the reaction L-methionyl-[protein] + a quinone + H2O = L-methionyl-(R)-S-oxide-[protein] + a quinol. Part of the MsrPQ system that repairs oxidized periplasmic proteins containing methionine sulfoxide residues (Met-O), using respiratory chain electrons. Thus protects these proteins from oxidative-stress damage caused by reactive species of oxygen and chlorine generated by the host defense mechanisms. MsrPQ is essential for the maintenance of envelope integrity under bleach stress, rescuing a wide series of structurally unrelated periplasmic proteins from methionine oxidation. The catalytic subunit MsrP is non-stereospecific, being able to reduce both (R-) and (S-) diastereoisomers of methionine sulfoxide. The sequence is that of Protein-methionine-sulfoxide reductase catalytic subunit MsrP from Actinobacillus pleuropneumoniae serotype 5b (strain L20).